A 360-amino-acid chain; its full sequence is Protein Wnt-2 (360 aa).

Residues 1-25 (MNSPLRGIWLWLPLLLTWLTPEVSS) form the signal peptide. 11 disulfides stabilise this stretch: cysteine 76–cysteine 87, cysteine 127–cysteine 135, cysteine 137–cysteine 157, cysteine 206–cysteine 220, cysteine 208–cysteine 215, cysteine 278–cysteine 309, cysteine 294–cysteine 304, cysteine 308–cysteine 348, cysteine 324–cysteine 339, cysteine 326–cysteine 336, and cysteine 331–cysteine 332. Serine 212 carries O-palmitoleoyl serine; by PORCN lipidation. The N-linked (GlcNAc...) asparagine glycan is linked to asparagine 295.

The protein belongs to the Wnt family. Post-translationally, palmitoleoylation is required for efficient binding to frizzled receptors. Depalmitoleoylation leads to Wnt signaling pathway inhibition.

The protein resides in the secreted. Its subcellular location is the extracellular space. It is found in the extracellular matrix. In terms of biological role, ligand for members of the frizzled family of seven transmembrane receptors. Probable developmental protein. May be a signaling molecule which affects the development of discrete regions of tissues. Is likely to signal over only few cell diameters. The chain is Protein Wnt-2 (WNT2) from Ateles geoffroyi (Black-handed spider monkey).